The primary structure comprises 367 residues: o-succinylbenzoate synthase (367 aa).

The Proton donor role is filled by Lys-164. The Mg(2+) site is built by Asp-189, Glu-214, and Asp-239. Catalysis depends on Lys-263, which acts as the Proton acceptor.

This sequence belongs to the mandelate racemase/muconate lactonizing enzyme family. MenC type 2 subfamily. Homodimer. A divalent metal cation serves as cofactor.

The enzyme catalyses (1R,6R)-6-hydroxy-2-succinyl-cyclohexa-2,4-diene-1-carboxylate = 2-succinylbenzoate + H2O. It functions in the pathway quinol/quinone metabolism; 1,4-dihydroxy-2-naphthoate biosynthesis; 1,4-dihydroxy-2-naphthoate from chorismate: step 4/7. The protein operates within quinol/quinone metabolism; menaquinone biosynthesis. In terms of biological role, converts 2-succinyl-6-hydroxy-2,4-cyclohexadiene-1-carboxylate (SHCHC) to 2-succinylbenzoate (OSB). Also acts as a N-succinylamino acid racemase (NSAR) that catalyzes the racemization of N-succinyl-L-phenylglycine. Since the gene is encoded in a menaquinone synthesis operon, OSB synthase is probably the physiological activity. A pathway that requires NSAR activity has not been identified in this species, so whether NSAR is also a biological activity is unknown. The protein is o-succinylbenzoate synthase of Enterococcus faecalis (strain ATCC 700802 / V583).